The primary structure comprises 439 residues: Glycosyl hydrolase DigH (439 aa).

The N-terminal stretch at 1 to 27 is a signal peptide; that stretch reads MDICSRNKKLTIRRPAILVALALLLCS. C28 carries N-palmitoyl cysteine lipidation. The S-diacylglycerol cysteine moiety is linked to residue C28. Residues 34–54 form a disordered region; sequence ESMVTPPAGSKPPATTQQSSQ.

It belongs to the glycosyl hydrolase-like 10 (GHL10) family.

The protein localises to the cell outer membrane. In terms of biological role, divisome-localized glycosyl hydrolase that cleaves peptide-free (denuded) peptidoglycans. The polypeptide is Glycosyl hydrolase DigH (Escherichia coli O157:H7).